The following is a 251-amino-acid chain: tRNA (guanine-N(1)-)-methyltransferase (251 aa).

Residues Gly111 and 131-136 each bind S-adenosyl-L-methionine; that span reads LGDFVL.

The protein belongs to the RNA methyltransferase TrmD family. In terms of assembly, homodimer.

The protein resides in the cytoplasm. The catalysed reaction is guanosine(37) in tRNA + S-adenosyl-L-methionine = N(1)-methylguanosine(37) in tRNA + S-adenosyl-L-homocysteine + H(+). Functionally, specifically methylates guanosine-37 in various tRNAs. This Synechococcus sp. (strain JA-2-3B'a(2-13)) (Cyanobacteria bacterium Yellowstone B-Prime) protein is tRNA (guanine-N(1)-)-methyltransferase.